Consider the following 102-residue polypeptide: Citrate lyase acyl carrier protein (102 aa).

Position 14 is an O-(phosphoribosyl dephospho-coenzyme A)serine (serine 14).

Belongs to the CitD family. As to quaternary structure, oligomer with a subunit composition of (alpha,beta,gamma)6.

It localises to the cytoplasm. In terms of biological role, covalent carrier of the coenzyme of citrate lyase. The sequence is that of Citrate lyase acyl carrier protein from Streptococcus pyogenes serotype M18 (strain MGAS8232).